The chain runs to 522 residues: Glutamate--cysteine ligase (522 aa).

This sequence belongs to the glutamate--cysteine ligase type 1 family. Type 1 subfamily.

It carries out the reaction L-cysteine + L-glutamate + ATP = gamma-L-glutamyl-L-cysteine + ADP + phosphate + H(+). Its pathway is sulfur metabolism; glutathione biosynthesis; glutathione from L-cysteine and L-glutamate: step 1/2. This chain is Glutamate--cysteine ligase, found in Shewanella halifaxensis (strain HAW-EB4).